We begin with the raw amino-acid sequence, 412 residues long: Phospholipase A1-IIdelta (412 aa).

The residue at position 2 (Ala2) is an N-acetylalanine. The active-site Acyl-ester intermediate is the Ser238. Residues Ser238, Asp297, and His336 each act as charge relay system in the active site.

It belongs to the AB hydrolase superfamily. Lipase family. In terms of tissue distribution, expressed in leaves, stems, flowers and siliques, and, at low levels, in seeds and roots (at protein level).

The protein resides in the cytoplasm. Acylhydrolase that catalyzes the hydrolysis of phosphatidylcholine (PC) at the sn-1 position. High activity toward PC, medium activity toward monogalactosyldiacylglycerol (MGDG) and low activity toward triacylglycerol (TAG). Confers sensitivity to UV-B radiation probably by deesterifying membrane phospholipids. The protein is Phospholipase A1-IIdelta of Arabidopsis thaliana (Mouse-ear cress).